The primary structure comprises 197 residues: Phosphoheptose isomerase (197 aa).

The SIS domain maps to 36 to 197; it reads MVNALLNEGK…IDSQLFGSEE (162 aa). 51 to 53 contributes to the substrate binding site; sequence NGG. Positions 60 and 64 each coordinate Zn(2+). Residues E64, 93-94, 119-121, S124, and Q174 each bind substrate; these read ND and STS. Zn(2+) is bound by residues Q174 and H182.

The protein belongs to the SIS family. GmhA subfamily. Homotetramer. Zn(2+) is required as a cofactor.

The protein resides in the cytoplasm. It catalyses the reaction 2 D-sedoheptulose 7-phosphate = D-glycero-alpha-D-manno-heptose 7-phosphate + D-glycero-beta-D-manno-heptose 7-phosphate. It functions in the pathway carbohydrate biosynthesis; D-glycero-D-manno-heptose 7-phosphate biosynthesis; D-glycero-alpha-D-manno-heptose 7-phosphate and D-glycero-beta-D-manno-heptose 7-phosphate from sedoheptulose 7-phosphate: step 1/1. Its function is as follows. Catalyzes the isomerization of sedoheptulose 7-phosphate in D-glycero-D-manno-heptose 7-phosphate. The protein is Phosphoheptose isomerase of Pseudomonas fluorescens (strain Pf0-1).